The chain runs to 527 residues: Protein disulfide-isomerase A2 (527 aa).

The first 20 residues, 1–20 (MDKQLLPVLLLLLGVSGSWG), serve as a signal peptide directing secretion. Residues 20–41 (GQGEEPGGPSEVLPEEPTGEEV) are disordered. The region spanning 29–155 (SEVLPEEPTG…IAEWLRRRVG (127 aa)) is the Thioredoxin 1 domain. Active-site nucleophile residues include Cys74 and Cys77. The cysteines at positions 74 and 77 are disulfide-linked. N-linked (GlcNAc...) asparagine glycosylation is found at Asn130 and Asn287. One can recognise a Thioredoxin 2 domain in the interval 355–499 (VIAITAASVA…FSKFLDSGGH (145 aa)). Catalysis depends on nucleophile residues Cys421 and Cys424. The cysteines at positions 421 and 424 are disulfide-linked. Residues 495-527 (DSGGHLPKEEPKEPAASAPEAQANSTLGPKEEL) are disordered. The N-linked (GlcNAc...) asparagine glycan is linked to Asn518. Residues 524–527 (KEEL) carry the Prevents secretion from ER motif.

This sequence belongs to the protein disulfide isomerase family. In terms of assembly, part of a large chaperone multiprotein complex comprising DNAJB11, HSP90B1, HSPA5, HYOU, PDIA2, PDIA4, PDIA6, PPIB, SDF2L1, UGGT1 and very small amounts of ERP29, but not, or at very low levels, CALR nor CANX. Post-translationally, glycosylated. Highly expressed in pancreas.

The protein resides in the endoplasmic reticulum lumen. The enzyme catalyses Catalyzes the rearrangement of -S-S- bonds in proteins.. Its function is as follows. Acts as an intracellular estrogen-binding protein. May be involved in modulating cellular levels and biological functions of estrogens in the pancreas. May act as a chaperone that inhibits aggregation of misfolded proteins. The polypeptide is Protein disulfide-isomerase A2 (Mus musculus (Mouse)).